The following is a 563-amino-acid chain: MFNELFRKVVEAISKASKFTPEEIAACMERSYQPKKPNVTLFLDRISPSPQEDAKELLETLAGANIELIENLAIRKSSVCCDINKRAILKDVLGYIQKNREIFGNNNVGKGKRMVVEYSSPNIAKIFHIGHLRTTVLGQFIVNLLRASGYETTSINYFGDWGKQFGFVLLGYSKYGSEEELEKDPLKHLFNVYVKISADAEKNPDVDSEAKEIFRMMEEDKDEWCMNLWRRFRELSIEKYKVLYKRLNVEFDVYSGESMYNEKGKSIVETSKQIKTDEDGSKVFDLGKAGKVLVMKNDGTTLYITRDIAAAIERLEEYSPEKIIYVVSSEQNKHFEDLFGVLEMLGYDKDKFQHVSYGLVAGMSTRAGKVQLLEDIIQESTEVMKNVMMSDNNKGSFTAAEMDQTAEVLAISTLLVMDFTARRVKGYEFDIEKRARNTSGTGLYLQYAHCRLRSIETKNSNVDYNDIETIDFELIHVPKVLNLVYKLLWFEHVVEKCLEDYEPSRIVTYLQDLASSINGAINILRVLGVDKELARARLLVLSSARIVLHNGLRILGATPLNKM.

This sequence belongs to the class-I aminoacyl-tRNA synthetase family. As to quaternary structure, monomer.

The catalysed reaction is tRNA(Arg) + L-arginine + ATP = L-arginyl-tRNA(Arg) + AMP + diphosphate. The chain is Arginine--tRNA ligase from Encephalitozoon cuniculi (strain GB-M1) (Microsporidian parasite).